A 261-amino-acid polypeptide reads, in one-letter code: Putative imidazole glycerol phosphate synthase subunit hisF2 (261 aa).

D138 is an active-site residue.

Belongs to the HisA/HisF family. Heterodimer of HisH and HisF.

The protein resides in the cytoplasm. It carries out the reaction 5-[(5-phospho-1-deoxy-D-ribulos-1-ylimino)methylamino]-1-(5-phospho-beta-D-ribosyl)imidazole-4-carboxamide + L-glutamine = D-erythro-1-(imidazol-4-yl)glycerol 3-phosphate + 5-amino-1-(5-phospho-beta-D-ribosyl)imidazole-4-carboxamide + L-glutamate + H(+). It functions in the pathway amino-acid biosynthesis; L-histidine biosynthesis; L-histidine from 5-phospho-alpha-D-ribose 1-diphosphate: step 5/9. Functionally, IGPS catalyzes the conversion of PRFAR and glutamine to IGP, AICAR and glutamate. The HisF subunit catalyzes the cyclization activity that produces IGP and AICAR from PRFAR using the ammonia provided by the HisH subunit. The polypeptide is Putative imidazole glycerol phosphate synthase subunit hisF2 (hisF2) (Prochlorococcus marinus (strain MIT 9313)).